A 459-amino-acid chain; its full sequence is Cysteine--tRNA ligase (459 aa).

Cysteine 28 serves as a coordination point for Zn(2+). A 'HIGH' region motif is present at residues 30–40; the sequence is VTIYDLCHIGH. Zn(2+)-binding residues include cysteine 209, histidine 234, and glutamate 238. The short motif at 266 to 270 is the 'KMSKS' region element; the sequence is KMSKS. ATP is bound at residue lysine 269.

Belongs to the class-I aminoacyl-tRNA synthetase family. In terms of assembly, monomer. It depends on Zn(2+) as a cofactor.

The protein localises to the cytoplasm. It catalyses the reaction tRNA(Cys) + L-cysteine + ATP = L-cysteinyl-tRNA(Cys) + AMP + diphosphate. This is Cysteine--tRNA ligase from Shewanella piezotolerans (strain WP3 / JCM 13877).